We begin with the raw amino-acid sequence, 445 residues long: Argininosuccinate synthase (445 aa).

ATP-binding positions include 17–25 (AFSGGLDTS) and alanine 43. Tyrosine 99 is an L-citrulline binding site. ATP is bound by residues glycine 129 and threonine 131. The L-aspartate site is built by threonine 131, asparagine 135, and aspartate 136. Asparagine 135 is a binding site for L-citrulline. Aspartate 136 provides a ligand contact to ATP. Positions 139 and 192 each coordinate L-citrulline. Aspartate 194 contacts ATP. Positions 201, 203, and 280 each coordinate L-citrulline.

Belongs to the argininosuccinate synthase family. Type 2 subfamily. As to quaternary structure, homotetramer.

Its subcellular location is the cytoplasm. It carries out the reaction L-citrulline + L-aspartate + ATP = 2-(N(omega)-L-arginino)succinate + AMP + diphosphate + H(+). It functions in the pathway amino-acid biosynthesis; L-arginine biosynthesis; L-arginine from L-ornithine and carbamoyl phosphate: step 2/3. This chain is Argininosuccinate synthase, found in Burkholderia cenocepacia (strain ATCC BAA-245 / DSM 16553 / LMG 16656 / NCTC 13227 / J2315 / CF5610) (Burkholderia cepacia (strain J2315)).